We begin with the raw amino-acid sequence, 2176 residues long: Nipped-B-like protein scc-2 (2176 aa).

The segment covering 1 to 25 has biased composition (polar residues); the sequence is MDPNNLQNSLNGTGNPNFQPVQTNA. Disordered stretches follow at residues 1 to 27, 150 to 170, 464 to 483, 495 to 514, 523 to 551, 585 to 615, and 669 to 708; these read MDPN…NAGG, PIPQ…QIQS, SEAT…DEEG, MMSV…NQRK, YDSL…DDED, QHFF…IESR, and DSLD…EMDE. Residues 464 to 473 are compositionally biased toward low complexity; it reads SEATQSSSVT. 2 stretches are compositionally biased toward basic and acidic residues: residues 597–615 and 685–695; these read EDRI…IESR and SGGDHHHKGDE. The span at 696–708 shows a compositional bias: acidic residues; that stretch reads NSDESDEEEEMDE. HEAT repeat units follow at residues 1280–1312, 1320–1351, 1353–1388, 1393–1426, 1692–1723, 1803–1834, and 1840–1871; these read DTYL…IIEA, EDVQ…FVLY, EEYV…ICEK, EMIP…LWFQ, EKVF…FCAQ, QKYW…TLNQ, and GASI…IDSK. The interval 2149 to 2176 is disordered; it reads ITAANDDYDEEEDGGEDSRGPIMEQMEH. The span at 2154–2163 shows a compositional bias: acidic residues; sequence DDYDEEEDGG.

This sequence belongs to the SCC2/Nipped-B family. As to quaternary structure, may heterodimerize with mau-2/SCC4 to form the cohesin loading complex.

The protein resides in the nucleus. Its subcellular location is the chromosome. Functionally, plays an important role in the loading of the cohesin complex on to meiotic chromosomes. Forms a heterodimeric complex (also known as cohesin loading complex) with mau-2/SCC4 which mediates the loading of the cohesin complex onto chromatin. Plays an essential role in cell division during embryonic development. Promotes normal chromosome organization during meiosis. Required for the assembly of the synaptonemal complex between homologous chromosomes to promote sister chromatid cohesion during meiosis. Required for chromosome segregation during mitosis and meiosis. Plays a role in DNA double-strand break (DSB) repair during meiotic recombination and promotes the assembly of the 9-1-1 cell-cycle checkpoint response complex which is required for inducing apoptosis in response to DNA damage, at DNA damage sites. This is Nipped-B-like protein scc-2 from Caenorhabditis elegans.